A 297-amino-acid chain; its full sequence is Protease HtpX homolog (297 aa).

The next 2 helical transmembrane spans lie at 5–25 and 43–63; these read IFLF…VLTI and LMAL…ISLG. Position 154 (His154) interacts with Zn(2+). Glu155 is a catalytic residue. His158 contributes to the Zn(2+) binding site. Transmembrane regions (helical) follow at residues 169-189 and 203-223; these read LLQG…AWVA and FIAM…VVFA. Glu229 contributes to the Zn(2+) binding site.

Belongs to the peptidase M48B family. The cofactor is Zn(2+).

The protein resides in the cell membrane. The sequence is that of Protease HtpX homolog from Bacillus velezensis (strain DSM 23117 / BGSC 10A6 / LMG 26770 / FZB42) (Bacillus amyloliquefaciens subsp. plantarum).